The chain runs to 307 residues: Elongation factor Ts (307 aa).

Positions 79-82 (TDFV) are involved in Mg(2+) ion dislocation from EF-Tu.

It belongs to the EF-Ts family.

The protein localises to the cytoplasm. Its function is as follows. Associates with the EF-Tu.GDP complex and induces the exchange of GDP to GTP. It remains bound to the aminoacyl-tRNA.EF-Tu.GTP complex up to the GTP hydrolysis stage on the ribosome. In Bartonella bacilliformis (strain ATCC 35685 / KC583 / Herrer 020/F12,63), this protein is Elongation factor Ts.